Here is a 242-residue protein sequence, read N- to C-terminus: Exosome complex component ski6 (242 aa).

This sequence belongs to the RNase PH family. In terms of assembly, component of the RNA exosome complex. Specifically part of the catalytically inactive RNA exosome core complex (Exo-9) which may associate with the catalytic subunits rrp6 and dis3 in cytoplasmic- and nuclear-specific RNA exosome complex forms. Exo-9 is formed by a hexameric base ring of RNase PH domain-containing subunits and a cap ring consisting of csl4, rrp4 and rrp40.

Its subcellular location is the cytoplasm. The protein localises to the nucleus. The protein resides in the nucleolus. In terms of biological role, non-catalytic component of the RNA exosome complex which has 3'-&gt;5' exoribonuclease activity and participates in a multitude of cellular RNA processing and degradation events. In the nucleus, the RNA exosome complex is involved in proper maturation of stable RNA species such as rRNA, snRNA and snoRNA, in the elimination of RNA processing by-products and non-coding 'pervasive' transcripts, such as antisense RNA species and cryptic unstable transcripts (CUTs), and of mRNAs with processing defects, thereby limiting or excluding their export to the cytoplasm. In the cytoplasm, the RNA exosome complex is involved in general mRNA turnover and in RNA surveillance pathways, preventing translation of aberrant mRNAs. The catalytic inactive RNA exosome core complex of 9 subunits (Exo-9) is proposed to play a pivotal role in the binding and presentation of RNA for ribonucleolysis, and to serve as a scaffold for the association with catalytic subunits and accessory proteins or complexes. ski6 is part of the hexameric ring of RNase PH domain-containing subunits proposed to form a central channel which threads RNA substrates for degradation. This chain is Exosome complex component ski6 (ski6), found in Schizosaccharomyces pombe (strain 972 / ATCC 24843) (Fission yeast).